We begin with the raw amino-acid sequence, 161 residues long: Small ribosomal subunit protein uS19 (161 aa).

Residues 1–19 show a composition bias toward basic residues; it reads MARQKKYSGKGGARKKNKQ. The disordered stretch occupies residues 1-26; it reads MARQKKYSGKGGARKKNKQKQSVAPR.

This sequence belongs to the universal ribosomal protein uS19 family.

Functionally, protein S19 forms a complex with S13 that binds strongly to the 16S ribosomal RNA. The polypeptide is Small ribosomal subunit protein uS19 (Methanococcus maripaludis (strain C6 / ATCC BAA-1332)).